The primary structure comprises 142 residues: 3-hydroxyacyl-[acyl-carrier-protein] dehydratase FabZ (142 aa).

Histidine 47 is an active-site residue.

This sequence belongs to the thioester dehydratase family. FabZ subfamily.

The protein resides in the cytoplasm. It catalyses the reaction a (3R)-hydroxyacyl-[ACP] = a (2E)-enoyl-[ACP] + H2O. Involved in unsaturated fatty acids biosynthesis. Catalyzes the dehydration of short chain beta-hydroxyacyl-ACPs and long chain saturated and unsaturated beta-hydroxyacyl-ACPs. This Thermoanaerobacter pseudethanolicus (strain ATCC 33223 / 39E) (Clostridium thermohydrosulfuricum) protein is 3-hydroxyacyl-[acyl-carrier-protein] dehydratase FabZ.